We begin with the raw amino-acid sequence, 77 residues long: MDPIITAEITGNIATVGYGLAAIGPGIGVGIVAGKTVEAMARQPEMAGSLRTTMFLGIAFSEALALIGLATYFIFTN.

The next 2 helical transmembrane spans lie at 13–33 and 55–75; these read IATV…GIVA and FLGI…YFIF.

This sequence belongs to the ATPase C chain family. As to quaternary structure, F-type ATPases have 2 components, F(1) - the catalytic core - and F(0) - the membrane proton channel. F(1) has five subunits: alpha(3), beta(3), gamma(1), delta(1), epsilon(1). F(0) has three main subunits: a(1), b(2) and c(10-14). The alpha and beta chains form an alternating ring which encloses part of the gamma chain. F(1) is attached to F(0) by a central stalk formed by the gamma and epsilon chains, while a peripheral stalk is formed by the delta and b chains.

It is found in the cell membrane. In terms of biological role, f(1)F(0) ATP synthase produces ATP from ADP in the presence of a proton or sodium gradient. F-type ATPases consist of two structural domains, F(1) containing the extramembraneous catalytic core and F(0) containing the membrane proton channel, linked together by a central stalk and a peripheral stalk. During catalysis, ATP synthesis in the catalytic domain of F(1) is coupled via a rotary mechanism of the central stalk subunits to proton translocation. Functionally, key component of the F(0) channel; it plays a direct role in translocation across the membrane. A homomeric c-ring of between 10-14 subunits forms the central stalk rotor element with the F(1) delta and epsilon subunits. The protein is ATP synthase subunit c of Clavibacter sepedonicus (Clavibacter michiganensis subsp. sepedonicus).